Consider the following 420-residue polypeptide: Pre-mRNA-splicing factor RBM22 (420 aa).

Ala2 is modified (N-acetylalanine). Phosphoserine occurs at positions 4 and 102. Residues Lys139 and Lys149 each participate in a glycyl lysine isopeptide (Lys-Gly) (interchain with G-Cter in SUMO2) cross-link. The segment at 159–186 adopts a C3H1-type zinc-finger fold; the sequence is RNRPHICSFWVKGECKRGEECPYRHEKP. The residue at position 212 (Lys212) is an N6-acetyllysine. The region spanning 232–305 is the RRM domain; it reads TTLYVGGLGD…RRLNVKWGRS (74 aa). Residue Lys290 forms a Glycyl lysine isopeptide (Lys-Gly) (interchain with G-Cter in SUMO2) linkage. 2 disordered regions span residues 303–343 and 371–420; these read GRSQ…AAEE and IAPP…HSSP. A compositionally biased stretch (basic and acidic residues) spans 309-318; sequence RGKEKEKDGT.

The protein belongs to the SLT11 family. In terms of assembly, component of the pre-catalytic and catalytic spliceosome complexes. Component of the postcatalytic spliceosome P complex. Interacts with PDCD6; the interaction induces translocation of PDCD6 in the cytoplasm. Interacts with PPIL1.

Its subcellular location is the nucleus. The protein resides in the cytoplasm. Required for pre-mRNA splicing as component of the activated spliceosome. Involved in the first step of pre-mRNA splicing. Binds directly to the internal stem-loop (ISL) domain of the U6 snRNA and to the pre-mRNA intron near the 5' splice site during the activation and catalytic phases of the spliceosome cycle. Involved in both translocations of the nuclear SLU7 to the cytoplasm and the cytosolic calcium-binding protein PDCD6 to the nucleus upon cellular stress responses. In Rattus norvegicus (Rat), this protein is Pre-mRNA-splicing factor RBM22 (Rbm22).